We begin with the raw amino-acid sequence, 336 residues long: Holliday junction branch migration complex subunit RuvB (336 aa).

The interval 4–184 (ADRLISAGTT…FGIVQRLEFY (181 aa)) is large ATPase domain (RuvB-L). ATP contacts are provided by residues Ile23, Arg24, Gly65, Lys68, Thr69, Thr70, 131 to 133 (EDY), Arg174, Tyr184, and Arg221. Thr69 provides a ligand contact to Mg(2+). The tract at residues 185–255 (QVPDLQYIVS…IAAQALDMLN (71 aa)) is small ATPAse domain (RuvB-S). A head domain (RuvB-H) region spans residues 258–336 (AEGFDYMDRK…HFGITPPEMP (79 aa)). 3 residues coordinate DNA: Arg294, Arg313, and Arg318.

It belongs to the RuvB family. Homohexamer. Forms an RuvA(8)-RuvB(12)-Holliday junction (HJ) complex. HJ DNA is sandwiched between 2 RuvA tetramers; dsDNA enters through RuvA and exits via RuvB. An RuvB hexamer assembles on each DNA strand where it exits the tetramer. Each RuvB hexamer is contacted by two RuvA subunits (via domain III) on 2 adjacent RuvB subunits; this complex drives branch migration. In the full resolvosome a probable DNA-RuvA(4)-RuvB(12)-RuvC(2) complex forms which resolves the HJ.

Its subcellular location is the cytoplasm. It catalyses the reaction ATP + H2O = ADP + phosphate + H(+). The RuvA-RuvB-RuvC complex processes Holliday junction (HJ) DNA during genetic recombination and DNA repair, while the RuvA-RuvB complex plays an important role in the rescue of blocked DNA replication forks via replication fork reversal (RFR). RuvA specifically binds to HJ cruciform DNA, conferring on it an open structure. The RuvB hexamer acts as an ATP-dependent pump, pulling dsDNA into and through the RuvAB complex. RuvB forms 2 homohexamers on either side of HJ DNA bound by 1 or 2 RuvA tetramers; 4 subunits per hexamer contact DNA at a time. Coordinated motions by a converter formed by DNA-disengaged RuvB subunits stimulates ATP hydrolysis and nucleotide exchange. Immobilization of the converter enables RuvB to convert the ATP-contained energy into a lever motion, pulling 2 nucleotides of DNA out of the RuvA tetramer per ATP hydrolyzed, thus driving DNA branch migration. The RuvB motors rotate together with the DNA substrate, which together with the progressing nucleotide cycle form the mechanistic basis for DNA recombination by continuous HJ branch migration. Branch migration allows RuvC to scan DNA until it finds its consensus sequence, where it cleaves and resolves cruciform DNA. The chain is Holliday junction branch migration complex subunit RuvB from Shigella boydii serotype 18 (strain CDC 3083-94 / BS512).